The chain runs to 434 residues: 26S proteasome regulatory subunit RPN6 (434 aa).

Position 2 is an N-acetylserine (serine 2). The PCI domain occupies 235–404; the sequence is AFSYFFESFE…GWLYVYETPN (170 aa).

The protein belongs to the proteasome subunit S9 family. In terms of assembly, component of the lid subcomplex of the 19S proteasome regulatory particle complex (also named PA700 complex). The 26S proteasome consists of a 20S proteasome core and two 19S regulatory subunits. N-acetylated by NAT1.

In terms of biological role, component of the lid subcomplex of the 26S proteasome, a multiprotein complex involved in the ATP-dependent degradation of ubiquitinated proteins. In the complex, RPN6 is required for proteasome assembly. The chain is 26S proteasome regulatory subunit RPN6 (RPN6) from Saccharomyces cerevisiae (strain ATCC 204508 / S288c) (Baker's yeast).